Reading from the N-terminus, the 251-residue chain is Malonyl-[acyl-carrier protein] O-methyltransferase (251 aa).

The protein belongs to the methyltransferase superfamily.

The catalysed reaction is malonyl-[ACP] + S-adenosyl-L-methionine = malonyl-[ACP] methyl ester + S-adenosyl-L-homocysteine. The protein operates within cofactor biosynthesis; biotin biosynthesis. Functionally, converts the free carboxyl group of a malonyl-thioester to its methyl ester by transfer of a methyl group from S-adenosyl-L-methionine (SAM). It allows to synthesize pimeloyl-ACP via the fatty acid synthetic pathway. In Enterobacter lignolyticus (strain SCF1), this protein is Malonyl-[acyl-carrier protein] O-methyltransferase.